A 340-amino-acid polypeptide reads, in one-letter code: MKVSIVGITGYSGLELVKILNNHKKVELVSIHATKEVGRRLSDVYPYLAGVCDLKIEDFNAQEIIEKADLVFFATPSGVASSLAEEFVQADFPIIDLSGDHRLPADVYQEWYKKSPAKKMILNKFTYALSEYTDVKGKKFIANPGCYATATELALIPLVAAGLIETDSIIVDAKSGLTGAGKALSESSHFVNVHDNYMTYKLNHHQHIPEIVQTLQAFDADMPEIQFSTSLLPVNRGIMATVYCKLKKDVAVSDIASAFAKAYDDKPFVRVQENLPELHNVIGSNFTDIGFAYNEKTNVMTVISVIDNLLKGASGQAVQNLNLMQGWDETEGLHMTPSYL.

Cysteine 146 is an active-site residue.

The protein belongs to the NAGSA dehydrogenase family. Type 1 subfamily.

Its subcellular location is the cytoplasm. The enzyme catalyses N-acetyl-L-glutamate 5-semialdehyde + phosphate + NADP(+) = N-acetyl-L-glutamyl 5-phosphate + NADPH + H(+). Its pathway is amino-acid biosynthesis; L-arginine biosynthesis; N(2)-acetyl-L-ornithine from L-glutamate: step 3/4. Functionally, catalyzes the NADPH-dependent reduction of N-acetyl-5-glutamyl phosphate to yield N-acetyl-L-glutamate 5-semialdehyde. The sequence is that of N-acetyl-gamma-glutamyl-phosphate reductase from Streptococcus thermophilus (strain ATCC BAA-491 / LMD-9).